Consider the following 860-residue polypeptide: MQEQYRPEEIESKVQLHWEEKRTFEVTEDESKEKYYCLSMLPYPSGRLHMGHVRNYTIGDVIARYQRMLGKNVLQPIGWDAFGLPAEGAAVKNNTAPAPWTYDNINYMKNQLKMLGFGYDWSRELATCTPEYYRWEQQFFTELYKKGLVYKKTSAVNWCPNDQTVLANEQVIDGCCWRCDTKVERKEIPQWFIKITAYADELLNDLDKLDHWPDTVKTMQRNWIGRSEGVEITFDVQNSDEKLTVYTTRPDTFMGVTYLAVAAGHPLAQAAAAANPALGDFIAECRNTKVAEADMATMEKKGVDTGLKAIHPLTGEAIPVWAANFVLMEYGTGAVMAVPGHDQRDYEFATKYSLPIKPVILTAEGTAPDLSEQALTEKGVLFNSGEFDGLDFEAAFNAIADKLAAKGVGERKVNYRLRDWGVSRQRYWGAPIPMVTLEDGTVMPTPADQLPVILPEDVVMDGITSPIKADPEWAKTTVNGQPALRETDTFDTFMESSWYYARYTCPQYKEGMLDEKAANYWLPVDIYIGGIEHAIMHLLYFRFFHKLMRDAGMVNSDEPAKQLLCQGMVLADAFYYVGANGERNWVSPKDAIVERDEKGRIVKASDAAGHELVYTGMSKMSKSKNNGIDPQEMVERYGADTVRLFMMFASPADMTLEWQESGVEGANRFLKRVWRLVYEHTSLGDAPALNVDALNDDQKALRRDVHKTIAKVSDDIGRRQTFNTAIAAIMELMNKLAKAPQEGEQDRALMREALLAVVRMLNPFTPHVSFTLWQELKGEGDIDNAPWPQADDSAMVEDTTLVVVQVNGKVRGKITVAADATEEQVRERAAQEHLVAKYLAGVTVRKVIYVPGKLLNLVVG.

The short motif at 42 to 52 is the 'HIGH' region element; that stretch reads PYPSGRLHMGH. Positions 619–623 match the 'KMSKS' region motif; it reads KMSKS. Position 622 (Lys-622) interacts with ATP.

It belongs to the class-I aminoacyl-tRNA synthetase family.

It is found in the cytoplasm. It catalyses the reaction tRNA(Leu) + L-leucine + ATP = L-leucyl-tRNA(Leu) + AMP + diphosphate. This Cronobacter sakazakii (strain ATCC BAA-894) (Enterobacter sakazakii) protein is Leucine--tRNA ligase.